Consider the following 121-residue polypeptide: UPF0344 protein BCG9842_B4136 (121 aa).

The next 4 helical transmembrane spans lie at 6 to 26, 38 to 58, 65 to 85, and 92 to 112; these read ITAWALGLILFFVAYSLYSAG, LMYIIIIVTGFMLYMSIVKTA, WYGLKMLTGILVIGGMEMVLV, and PTGAVWGLFIVALVAVFYLGL.

It belongs to the UPF0344 family.

The protein resides in the cell membrane. This Bacillus cereus (strain G9842) protein is UPF0344 protein BCG9842_B4136.